Consider the following 196-residue polypeptide: UMP-CMP kinase (196 aa).

G13–T18 is an ATP binding site. Residues S33–V63 form an NMP region. Residues R39, K61–V63, and G93–R96 contribute to the a ribonucleoside 5'-phosphate site. Residue N100 coordinates CMP. The interval E133 to D143 is LID. An ATP-binding site is contributed by R134. A ribonucleoside 5'-phosphate-binding residues include R140 and R151. R179 is an ATP binding site.

Belongs to the adenylate kinase family. UMP-CMP kinase subfamily. In terms of assembly, monomer. Mg(2+) serves as cofactor.

It is found in the nucleus. The protein resides in the cytoplasm. It catalyses the reaction CMP + ATP = CDP + ADP. The catalysed reaction is dCMP + ATP = dCDP + ADP. The enzyme catalyses UMP + ATP = UDP + ADP. It carries out the reaction a 2'-deoxyribonucleoside 5'-diphosphate + ATP = a 2'-deoxyribonucleoside 5'-triphosphate + ADP. It catalyses the reaction a ribonucleoside 5'-diphosphate + ATP = a ribonucleoside 5'-triphosphate + ADP. Functionally, catalyzes the phosphorylation of pyrimidine nucleoside monophosphates at the expense of ATP. Plays an important role in de novo pyrimidine nucleotide biosynthesis. Has preference for UMP and CMP as phosphate acceptors. Also displays broad nucleoside diphosphate kinase activity. The sequence is that of UMP-CMP kinase (cmpk) from Danio rerio (Zebrafish).